Consider the following 494-residue polypeptide: Apolipoprotein N-acyltransferase (494 aa).

6 consecutive transmembrane segments (helical) span residues 16–36 (TVGG…FIWI), 41–61 (LWAS…AILL), 62–82 (SYRW…IAFS), 133–153 (LIWG…FGLG), 173–193 (GGLA…IFAF), and 202–222 (LFAL…ILLA). The region spanning 235-461 (WQTNIPTRQK…EGVGVIDINV (227 aa)) is the CN hydrolase domain. Glutamate 276 (proton acceptor) is an active-site residue. Lysine 325 is an active-site residue. Cysteine 373 functions as the Nucleophile in the catalytic mechanism. A helical transmembrane segment spans residues 468–488 (YVRWGEIPLISSLLIVLCFIA).

It belongs to the CN hydrolase family. Apolipoprotein N-acyltransferase subfamily.

The protein resides in the cell inner membrane. It carries out the reaction N-terminal S-1,2-diacyl-sn-glyceryl-L-cysteinyl-[lipoprotein] + a glycerophospholipid = N-acyl-S-1,2-diacyl-sn-glyceryl-L-cysteinyl-[lipoprotein] + a 2-acyl-sn-glycero-3-phospholipid + H(+). It functions in the pathway protein modification; lipoprotein biosynthesis (N-acyl transfer). Its function is as follows. Catalyzes the phospholipid dependent N-acylation of the N-terminal cysteine of apolipoprotein, the last step in lipoprotein maturation. In Prochlorococcus marinus (strain SARG / CCMP1375 / SS120), this protein is Apolipoprotein N-acyltransferase.